The chain runs to 184 residues: V-type proton ATPase subunit E (184 aa).

This sequence belongs to the V-ATPase E subunit family.

Produces ATP from ADP in the presence of a proton gradient across the membrane. In Finegoldia magna (strain ATCC 29328 / DSM 20472 / WAL 2508) (Peptostreptococcus magnus), this protein is V-type proton ATPase subunit E.